A 343-amino-acid chain; its full sequence is MPIDCKAKCGNRATLKRPKTGDALCKACFFAAFEAEIHHTIISSKLFRRGEKVAVAASGGKDSTVLAHVLKLLNERHDYGLDLVLLSIDEGITGYRDDSLETVKQNRDDYQMPLKILSYEELYGWTMDRIVAQIGRSNNCTFCGVFRRQALDRGAKLLGVDSIATGHNADDIAETVLMNILRGDTARLRRCTDIRTGGSEDSIPRVKPLKYSYEKEIVMYAHYKKLVYFSTECVFAPNAYRGHARAFLKDLEKVRPSVIMDIIYSGEQLRFKDTVKKPVRGICERCSFVSSQQPCKACVLLEGLNRGLPKLGIGKKSKGDRMIAKQNQELALRERANIVKNDF.

This sequence belongs to the TtcA family. CTU1/NCS6/ATPBD3 subfamily.

The protein localises to the cytoplasm. The protein operates within tRNA modification; 5-methoxycarbonylmethyl-2-thiouridine-tRNA biosynthesis. Plays a central role in 2-thiolation of mcm(5)S(2)U at tRNA wobble positions of tRNA(Lys), tRNA(Glu) and tRNA(Gln). Directly binds tRNAs and probably acts by catalyzing adenylation of tRNAs, an intermediate required for 2-thiolation. It is unclear whether it acts as a sulfurtransferase that transfers sulfur from thiocarboxylated URM1 onto the uridine of tRNAs at wobble position. The chain is Cytoplasmic tRNA 2-thiolation protein 1 from Drosophila virilis (Fruit fly).